Here is a 399-residue protein sequence, read N- to C-terminus: Elongation factor Tu 2 (399 aa).

A tr-type G domain is found at lysine 10–glutamate 209. Positions glycine 19–threonine 26 are G1. Residue glycine 19–threonine 26 participates in GTP binding. Residue threonine 26 participates in Mg(2+) binding. Positions glycine 60 to alanine 64 are G2. A G3 region spans residues aspartate 81 to glycine 84. Residues aspartate 81 to histidine 85 and asparagine 136 to aspartate 139 contribute to the GTP site. The segment at asparagine 136–aspartate 139 is G4. A G5 region spans residues serine 174–leucine 176.

Belongs to the TRAFAC class translation factor GTPase superfamily. Classic translation factor GTPase family. EF-Tu/EF-1A subfamily. In terms of assembly, monomer.

The protein localises to the cytoplasm. It carries out the reaction GTP + H2O = GDP + phosphate + H(+). GTP hydrolase that promotes the GTP-dependent binding of aminoacyl-tRNA to the A-site of ribosomes during protein biosynthesis. The polypeptide is Elongation factor Tu 2 (Syntrophotalea carbinolica (strain DSM 2380 / NBRC 103641 / GraBd1) (Pelobacter carbinolicus)).